Consider the following 388-residue polypeptide: Alanine racemase 3 (388 aa).

Lys41 functions as the Proton acceptor; specific for D-alanine in the catalytic mechanism. Lys41 carries the post-translational modification N6-(pyridoxal phosphate)lysine. A substrate-binding site is contributed by Arg135. Residue Tyr256 is the Proton acceptor; specific for L-alanine of the active site. Met304 contacts substrate.

The protein belongs to the alanine racemase family. Pyridoxal 5'-phosphate serves as cofactor.

It catalyses the reaction L-alanine = D-alanine. It participates in amino-acid biosynthesis; D-alanine biosynthesis; D-alanine from L-alanine: step 1/1. Catalyzes the interconversion of L-alanine and D-alanine. May also act on other amino acids. The protein is Alanine racemase 3 (alr3) of Mesorhizobium japonicum (strain LMG 29417 / CECT 9101 / MAFF 303099) (Mesorhizobium loti (strain MAFF 303099)).